The primary structure comprises 468 residues: ATP synthase subunit beta (468 aa).

155 to 162 (GGAGVGKT) contributes to the ATP binding site.

This sequence belongs to the ATPase alpha/beta chains family. As to quaternary structure, F-type ATPases have 2 components, CF(1) - the catalytic core - and CF(0) - the membrane proton channel. CF(1) has five subunits: alpha(3), beta(3), gamma(1), delta(1), epsilon(1). CF(0) has three main subunits: a(1), b(2) and c(9-12). The alpha and beta chains form an alternating ring which encloses part of the gamma chain. CF(1) is attached to CF(0) by a central stalk formed by the gamma and epsilon chains, while a peripheral stalk is formed by the delta and b chains.

It localises to the cell membrane. It catalyses the reaction ATP + H2O + 4 H(+)(in) = ADP + phosphate + 5 H(+)(out). Produces ATP from ADP in the presence of a proton gradient across the membrane. The catalytic sites are hosted primarily by the beta subunits. The sequence is that of ATP synthase subunit beta from Streptococcus mutans serotype c (strain ATCC 700610 / UA159).